Consider the following 264-residue polypeptide: uncharacterized protein (264 aa).

This is an uncharacterized protein from Shigella flexneri.